The following is a 308-amino-acid chain: Microtubule integrity protein mal3 (308 aa).

One can recognise a Calponin-homology (CH) domain in the interval 2 to 103; the sequence is SESRQELLAW…FVQWAKRFWD (102 aa). Positions 117-162 are disordered; that stretch reads RGNRGPANTRVMNSSAGATGPSRRRQVSSGSSTPSMTKSSANNNNV. Low complexity predominate over residues 144 to 162; it reads SSGSSTPSMTKSSANNNNV. Residues 173-247 enclose the EB1 C-terminal domain; the sequence is RAKQAQQQIT…LYSTEDGFEL (75 aa).

It belongs to the MAPRE family. As to quaternary structure, interacts with tea2.

It localises to the cytoplasm. The protein localises to the cytoskeleton. In terms of biological role, may play a role in regulating the integrity of microtubules possibly by influencing their stability. Involved in an anchoring mechanism to maintain tea2 and tip1 at growing microtubule ends. Strongly stimulates the ATPase activity of tea2. The sequence is that of Microtubule integrity protein mal3 (mal3) from Schizosaccharomyces pombe (strain 972 / ATCC 24843) (Fission yeast).